A 101-amino-acid chain; its full sequence is uncharacterized protein (101 aa).

This is an uncharacterized protein from Haemophilus influenzae (strain ATCC 51907 / DSM 11121 / KW20 / Rd).